A 117-amino-acid polypeptide reads, in one-letter code: DNA-directed RNA polymerase subunit omega (117 aa).

A compositionally biased stretch (basic and acidic residues) spans 96 to 105 (KEEAEEEAKQ). The tract at residues 96-117 (KEEAEEEAKQKNSRAAKAAAAE) is disordered. Over residues 108–117 (SRAAKAAAAE) the composition is skewed to low complexity.

The protein belongs to the RNA polymerase subunit omega family. In terms of assembly, the RNAP catalytic core consists of 2 alpha, 1 beta, 1 beta' and 1 omega subunit. When a sigma factor is associated with the core the holoenzyme is formed, which can initiate transcription.

It carries out the reaction RNA(n) + a ribonucleoside 5'-triphosphate = RNA(n+1) + diphosphate. Functionally, promotes RNA polymerase assembly. Latches the N- and C-terminal regions of the beta' subunit thereby facilitating its interaction with the beta and alpha subunits. The polypeptide is DNA-directed RNA polymerase subunit omega (rpoZ) (Lactococcus lactis subsp. lactis (strain IL1403) (Streptococcus lactis)).